The sequence spans 328 residues: D-cysteine desulfhydrase (328 aa).

At Lys-51 the chain carries N6-(pyridoxal phosphate)lysine.

Belongs to the ACC deaminase/D-cysteine desulfhydrase family. Homodimer. The cofactor is pyridoxal 5'-phosphate.

It catalyses the reaction D-cysteine + H2O = hydrogen sulfide + pyruvate + NH4(+) + H(+). Its function is as follows. Catalyzes the alpha,beta-elimination reaction of D-cysteine and of several D-cysteine derivatives. It could be a defense mechanism against D-cysteine. The polypeptide is D-cysteine desulfhydrase (Salmonella paratyphi A (strain AKU_12601)).